Consider the following 177-residue polypeptide: Antigen TpF1 (177 aa).

The protein belongs to the Dps family. In terms of assembly, homodecamer; either linked or stabilized by disulfide bonds.

Its function is as follows. May play an important structural role in the outer membrane. The chain is Antigen TpF1 (tpf1) from Treponema pallidum (strain Nichols).